The sequence spans 331 residues: MSWLTPALVTIILTVVKAIVVLLAVVICGALLSWVERRLLGLWQDRYGPNRVGPFGAFQLGADMVKMFFKEDWTPPFADKMIFTLAPVIAMGALLVAFAIVPITPTWGVADLNIGILFFFAMAGLTVYAVLFAGWSSNNKFALLGSLRASAQTISYEVFLALSLMGIVAQVGSFNMRDIVQYQIDNVWFIIPQFFGFCTFIIAGVAVTHRHPFDQPEAEQELADGYHIEYAGMKWGMFFVGEYIGIVLVSALLATLFFGGWHGPFLDTLPWLSFFYFAAKTGFFIMLFILIRASLPRPRYDQVMAFSWKVCLPLTLINLLVTGALVLAAAQ.

The next 8 helical transmembrane spans lie at 7 to 27 (ALVTIILTVVKAIVVLLAVVI), 81 to 101 (MIFTLAPVIAMGALLVAFAIV), 114 to 134 (IGILFFFAMAGLTVYAVLFAG), 154 to 174 (ISYEVFLALSLMGIVAQVGSF), 187 to 207 (VWFIIPQFFGFCTFIIAGVAV), 238 to 258 (FFVGEYIGIVLVSALLATLFF), 271 to 291 (WLSFFYFAAKTGFFIMLFILI), and 310 to 330 (VCLPLTLINLLVTGALVLAAA).

Belongs to the complex I subunit 1 family. NDH-1 is composed of 13 different subunits. Subunits NuoA, H, J, K, L, M, N constitute the membrane sector of the complex.

Its subcellular location is the cell inner membrane. It catalyses the reaction a quinone + NADH + 5 H(+)(in) = a quinol + NAD(+) + 4 H(+)(out). NDH-1 shuttles electrons from NADH, via FMN and iron-sulfur (Fe-S) centers, to quinones in the respiratory chain. The immediate electron acceptor for the enzyme in this species is believed to be ubiquinone. Couples the redox reaction to proton translocation (for every two electrons transferred, four hydrogen ions are translocated across the cytoplasmic membrane), and thus conserves the redox energy in a proton gradient. This subunit may bind ubiquinone. The sequence is that of NADH-quinone oxidoreductase subunit H from Pseudomonas aeruginosa (strain ATCC 15692 / DSM 22644 / CIP 104116 / JCM 14847 / LMG 12228 / 1C / PRS 101 / PAO1).